A 50-amino-acid polypeptide reads, in one-letter code: Protein PsbN (50 aa).

The chain crosses the membrane as a helical span at residues 14–34; the sequence is VAVTILAVLLALTGFGLWTAF.

It belongs to the PsbN family.

The protein resides in the cellular thylakoid membrane. May play a role in photosystem I and II biogenesis. The sequence is that of Protein PsbN from Prochlorococcus marinus (strain MIT 9515).